The sequence spans 507 residues: Chromosomal replication initiator protein DnaA (507 aa).

The domain I, interacts with DnaA modulators stretch occupies residues 1 to 87 (MSVELWQQCV…IGSKRSSAPR (87 aa)). Residues 85 to 110 (APRAAPNAPLAAAQVSQAQANAAPAS) are compositionally biased toward low complexity. Positions 85–158 (APRAAPNAPL…QQAPVRAEQR (74 aa)) are disordered. The segment at 87 to 170 (RAAPNAPLAA…QVEGALKHTS (84 aa)) is domain II. The segment covering 126–140 (QKTEEISEEPSRDSF) has biased composition (basic and acidic residues). The segment at 171 to 387 (YLNRTFTFEN…GALKRVIAHS (217 aa)) is domain III, AAA+ region. G215, G217, K218, and T219 together coordinate ATP. Residues 388–507 (HFMGRDITIE…YKNLLRTLTT (120 aa)) are domain IV, binds dsDNA.

This sequence belongs to the DnaA family. Oligomerizes as a right-handed, spiral filament on DNA at oriC.

The protein resides in the cytoplasm. Plays an essential role in the initiation and regulation of chromosomal replication. ATP-DnaA binds to the origin of replication (oriC) to initiate formation of the DNA replication initiation complex once per cell cycle. Binds the DnaA box (a 9 base pair repeat at the origin) and separates the double-stranded (ds)DNA. Forms a right-handed helical filament on oriC DNA; dsDNA binds to the exterior of the filament while single-stranded (ss)DNA is stabiized in the filament's interior. The ATP-DnaA-oriC complex binds and stabilizes one strand of the AT-rich DNA unwinding element (DUE), permitting loading of DNA polymerase. After initiation quickly degrades to an ADP-DnaA complex that is not apt for DNA replication. Binds acidic phospholipids. This chain is Chromosomal replication initiator protein DnaA, found in Pseudomonas fluorescens (strain Pf0-1).